The primary structure comprises 73 residues: Conotoxin CnIIIF (73 aa).

A signal peptide spans 1–19 (MSKLGVLLTICLLLFPLTA). The propeptide occupies 20-51 (LPMDGDQSVDRPAERMQDDISSGQHPLFNQKR). Cystine bridges form between C53–C72, C54–C70, and C60–C73.

Belongs to the conotoxin M superfamily. As to expression, expressed by the venom duct.

Its subcellular location is the secreted. Shows a paralytic effect in fish. This is Conotoxin CnIIIF from Conus consors (Singed cone).